A 554-amino-acid polypeptide reads, in one-letter code: MNLAWLQGLSLGLLSPPAPALLIFRSFTMAKVLVSDSIDQVGIDILKQVAQVDVKTGLSEAEIIDIVPEYDAIMLRSATKVTEKIIQAGSQLKIIGRAGVGVDNIDVPAATRQGIVVVNSPEGNTIAAAEHALAMMMALARHIPDANKSVKESKWERKQFIGTEVYKKTLGVVGLGKIGSHVAGVAKAMGMKLLAYDPFISQERADQIGCTLVDLDLLFSEADFITLHIPKTPETANLINAETLAKMKPTARIINCSRGGIIDEEALVTAIETAQIGGAALDVFAQEPLGESRLREFSNVILTPHLGASTEEAQVNVAVDVAEQIRDVLLGLPARSAVNIPGLTPDVMEKLRPYLKLAETLGTLVGQLAGGRIDRLTVCLQGDLAEYTNSQPLVVAAIKGLLSQALRERVNYVNAAIEAKERGIRVIETKDASVRDYSGSLHLKATGTMGEHSATGALLSNGEIRITDVDEFPINVPPNNYMLFTLHRDMPGIIGKIGSLLGSFNVNIASMQVGRKIVRGDAIMALSLDDPLPDGLLSEITKVAGIRDAYTVKL.

Residues 177–178 (KI), D197, 256–258 (CSR), and D282 contribute to the NAD(+) site. R258 is a catalytic residue. E287 is a catalytic residue. H305 serves as the catalytic Proton donor. 305–308 (HLGA) lines the NAD(+) pocket. In terms of domain architecture, ACT spans 482–554 (MLFTLHRDMP…GIRDAYTVKL (73 aa)).

It belongs to the D-isomer specific 2-hydroxyacid dehydrogenase family.

The enzyme catalyses (2R)-3-phosphoglycerate + NAD(+) = 3-phosphooxypyruvate + NADH + H(+). It carries out the reaction (R)-2-hydroxyglutarate + NAD(+) = 2-oxoglutarate + NADH + H(+). Its pathway is amino-acid biosynthesis; L-serine biosynthesis; L-serine from 3-phospho-D-glycerate: step 1/3. Its function is as follows. Catalyzes the reversible oxidation of 3-phospho-D-glycerate to 3-phosphonooxypyruvate, the first step of the phosphorylated L-serine biosynthesis pathway. Also catalyzes the reversible oxidation of 2-hydroxyglutarate to 2-oxoglutarate. The sequence is that of D-3-phosphoglycerate dehydrogenase (serA) from Synechocystis sp. (strain ATCC 27184 / PCC 6803 / Kazusa).